A 319-amino-acid chain; its full sequence is Glycine--tRNA ligase alpha subunit (319 aa).

Residues R290–G319 form a disordered region. A compositionally biased stretch (basic and acidic residues) spans G307–G319.

This sequence belongs to the class-II aminoacyl-tRNA synthetase family. As to quaternary structure, tetramer of two alpha and two beta subunits.

Its subcellular location is the cytoplasm. It carries out the reaction tRNA(Gly) + glycine + ATP = glycyl-tRNA(Gly) + AMP + diphosphate. The protein is Glycine--tRNA ligase alpha subunit of Moorella thermoacetica (strain ATCC 39073 / JCM 9320).